Consider the following 137-residue polypeptide: MMKGSRRTGNNTATTLNTPVVIHATQLPQHVSTDEVLQFLESFIDEKENIIDSTTMNTISGNAADADAAAVANTSLNIDTNLSSSISQLKRIQRDFKGLPPAQDFSAAPIQVSTTEKKETSIGVSATGGKKTTFADE.

The segment at 100–137 is disordered; it reads PPAQDFSAAPIQVSTTEKKETSIGVSATGGKKTTFADE. S121 bears the Phosphoserine mark.

As to quaternary structure, component of the RNA polymerase I (Pol I) complex consisting of 14 subunits: RPA135, RPA190, RPC40, RPA14, RPB5, RPO26, RPA43, RPB8, RPA12, RPB10, RPC19, RPC10, RPA49 and RPA34. The complex is composed of a horseshoe-shaped core containing ten subunits (RPA135, RPA190, RPB5, RPO26, RPB8, RPB10, RPC10, RPA12, RPC19 and RPC40) where RPA135 and RPA190 form the DNA-binding cleft. Outside of the core, RPA14 and RPA43 form the stalk that mediates interactions with transcription initiation factors and newly synthesized RNA. The N-terminus is blocked.

Its subcellular location is the nucleus. It is found in the nucleolus. Functionally, DNA-dependent RNA polymerases catalyze the transcription of DNA into RNA using the four ribonucleoside triphosphates as substrates. Component of RNA polymerase I (Pol I) which synthesizes ribosomal RNA precursors. RPA14 seems to play a role in the stability of subunits RPO26 and RPA43. In vitro, the RPA14-RPA43 subcomplex binds single-stranded RNA. The sequence is that of DNA-directed RNA polymerase I subunit RPA14 (RPA14) from Saccharomyces cerevisiae (strain ATCC 204508 / S288c) (Baker's yeast).